We begin with the raw amino-acid sequence, 410 residues long: Arginine deiminase (410 aa).

Cysteine 398 functions as the Amidino-cysteine intermediate in the catalytic mechanism.

This sequence belongs to the arginine deiminase family. Homodimer.

It is found in the cytoplasm. The catalysed reaction is L-arginine + H2O = L-citrulline + NH4(+). The protein operates within amino-acid degradation; L-arginine degradation via ADI pathway; carbamoyl phosphate from L-arginine: step 1/2. The chain is Arginine deiminase (arcA) from Mycoplasmopsis arginini (Mycoplasma arginini).